Reading from the N-terminus, the 441-residue chain is N-succinylarginine dihydrolase (441 aa).

Residues 19–28 (AGLSFGNEAS), asparagine 110, and 137–138 (HR) contribute to the substrate site. The active site involves glutamate 174. Arginine 212 is a substrate binding site. The active site involves histidine 248. Substrate is bound by residues aspartate 250 and asparagine 359. Cysteine 365 functions as the Nucleophile in the catalytic mechanism.

It belongs to the succinylarginine dihydrolase family. As to quaternary structure, homodimer.

The catalysed reaction is N(2)-succinyl-L-arginine + 2 H2O + 2 H(+) = N(2)-succinyl-L-ornithine + 2 NH4(+) + CO2. The protein operates within amino-acid degradation; L-arginine degradation via AST pathway; L-glutamate and succinate from L-arginine: step 2/5. Functionally, catalyzes the hydrolysis of N(2)-succinylarginine into N(2)-succinylornithine, ammonia and CO(2). The protein is N-succinylarginine dihydrolase of Erwinia tasmaniensis (strain DSM 17950 / CFBP 7177 / CIP 109463 / NCPPB 4357 / Et1/99).